The following is a 370-amino-acid chain: ATP/GTP phosphatase (370 aa).

It carries out the reaction ATP + H2O = ADP + phosphate + H(+). The catalysed reaction is GTP + H2O = GDP + phosphate + H(+). Its function is as follows. Has nucleotide phosphatase activity toward ATP and GTP, but not toward CTP, TTP and ADP. The protein is ATP/GTP phosphatase of Helicobacter pylori (strain ATCC 700392 / 26695) (Campylobacter pylori).